The chain runs to 210 residues: Large ribosomal subunit protein uL3 (210 aa).

Polar residues predominate over residues 131–140 (NRASHGNSLS). The segment at 131 to 150 (NRASHGNSLSHRAPGSIGCR) is disordered. An N5-methylglutamine modification is found at glutamine 151.

It belongs to the universal ribosomal protein uL3 family. Part of the 50S ribosomal subunit. Forms a cluster with proteins L14 and L19. Post-translationally, methylated by PrmB.

Functionally, one of the primary rRNA binding proteins, it binds directly near the 3'-end of the 23S rRNA, where it nucleates assembly of the 50S subunit. The chain is Large ribosomal subunit protein uL3 from Acidithiobacillus ferrooxidans (strain ATCC 23270 / DSM 14882 / CIP 104768 / NCIMB 8455) (Ferrobacillus ferrooxidans (strain ATCC 23270)).